The following is a 592-amino-acid chain: K(+) efflux antiporter 4 (592 aa).

The N-terminal stretch at 1 to 35 (MRRCKNNTDKFSVITMRLLTLLLICTFFFFFSFAY) is a signal peptide. A run of 12 helical transmembrane segments spans residues 169–189 (LISD…AFAC), 193–213 (PVIT…LSFV), 221–241 (TVAQ…FSAA), 248–268 (AVAI…SGIT), 279–299 (GIFV…KFLM), 313–333 (VGTL…LPVL), 343–363 (VLSM…LFVL), 388–408 (LAAV…GLSL), 437–457 (NFFA…HFLW), 462–482 (ILLA…AIVV), 491–511 (TAVL…VLLS), and 535–555 (LVTT…GVLL).

Belongs to the monovalent cation:proton antiporter 2 (CPA2) transporter (TC 2.A.37) family. KEA (TC 2.A.37.1) subfamily. Expressed in roots, stems, leaves, flowers and silique.

The protein localises to the golgi apparatus membrane. It localises to the golgi apparatus. It is found in the trans-Golgi network membrane. The protein resides in the prevacuolar compartment membrane. Its subcellular location is the endomembrane system. The catalysed reaction is K(+)(in) + H(+)(out) = K(+)(out) + H(+)(in). In terms of biological role, electroneutral K(+)/H(+) efflux antiporter involved in K(+) homeostasis and osmotic adjustment. Together with KEA5 and KEA6, promotes growth and development, and facilitates endosomal pH and ions homeostasis, as well as salt tolerance (e.g. K(+), NaCl and LiCl), probably by supporting cell wall biosynthesis during rapid etiolated seedling growth. This chain is K(+) efflux antiporter 4, found in Arabidopsis thaliana (Mouse-ear cress).